The following is a 514-amino-acid chain: Na(+)/H(+) antiporter NhaB (514 aa).

Transmembrane regions (helical) follow at residues 23 to 43 (LALLVFLIINPLTFFTNSFVA), 52 to 72 (IFTLAMALKCYPLLPGGLLAI), 97 to 117 (LLLMFMVAGIYFMKQLLLFIF), 120 to 140 (LLLSIRSKMVLSLAFCVAAAF), 144 to 164 (FLDALTVVAVVISVAVGFYGI), 202 to 222 (LMMHAGVGTALGGVMTMVGEP), 238 to 258 (FFLRMSPVTVPVLVCGLLTCM), 303 to 323 (AIIGVWLVTALALHLAEVGLI), 357 to 377 (LTVFFSIVAVIIDQHLFAPII), 391 to 411 (LFYLFNGLLSSISDNVFVGTI), 447 to 467 (ATPNGQAAFLFLLTSALAPLI), and 475 to 495 (VWMALPYTIILTLVGLLCVEF).

The protein belongs to the NhaB Na(+)/H(+) (TC 2.A.34) antiporter family.

The protein resides in the cell inner membrane. It catalyses the reaction 2 Na(+)(in) + 3 H(+)(out) = 2 Na(+)(out) + 3 H(+)(in). In terms of biological role, na(+)/H(+) antiporter that extrudes sodium in exchange for external protons. This Salmonella arizonae (strain ATCC BAA-731 / CDC346-86 / RSK2980) protein is Na(+)/H(+) antiporter NhaB.